The following is a 406-amino-acid chain: MSKWKDVKKVVLAYSGGLDTSIILKWLQTELGAEVVTFTADLGQGEELEPARKKAEMLGIKEIFIEDVREEFVRDFVFPMFRANAVYEGVYLLGTSIARPLISKHLIDIAKKTGADAIAHGATGKGNDQVRFELSAYALNPDIKIIAPWRDWSFKSRTQLLEFAEQHQIPVAKDKKGEAPFSVDANLLHSSSEGKVLEDPSQEAPEYVHMRTISPETAPDKATIIKIGFEKGDAVSINGERLSPATLLAKLNDYGRDNGIGRLDLVENRFVGMKSRGVYETPGGTILLAAHRAIESITLDRGAAHLKDELMPRYAELIYYGFWFSPEREMLQAAIDHSQRHVEGEVTLKLYKGNVMVIGRESAKSLYSDKLVTFEDDQGAYDQKDAAGFIKLNALRLRTLAARDRK.

ATP contacts are provided by residues 13–21 and Ala40; that span reads AYSGGLDTS. Residues Tyr91 and Ser96 each contribute to the L-citrulline site. Gly121 serves as a coordination point for ATP. 3 residues coordinate L-aspartate: Thr123, Asn127, and Asp128. An L-citrulline-binding site is contributed by Asn127. Positions 131, 182, 191, 267, and 279 each coordinate L-citrulline.

This sequence belongs to the argininosuccinate synthase family. Type 1 subfamily. Homotetramer.

It is found in the cytoplasm. The enzyme catalyses L-citrulline + L-aspartate + ATP = 2-(N(omega)-L-arginino)succinate + AMP + diphosphate + H(+). Its pathway is amino-acid biosynthesis; L-arginine biosynthesis; L-arginine from L-ornithine and carbamoyl phosphate: step 2/3. The protein is Argininosuccinate synthase of Brucella abortus (strain S19).